We begin with the raw amino-acid sequence, 127 residues long: MSNVPADLRYAKSHEWLKLEADGTATIGITDYAQSSLGDITYVQLPKVGAALKAGETFGVVESVKAASDLYAPAGGTVVAVNAELDSAPDAVNRAPYAEGWMLKLKLANPADANALLNAADYGKLLG.

Residues 24–106 (TATIGITDYA…YAEGWMLKLK (83 aa)) enclose the Lipoyl-binding domain. Lys-65 carries the N6-lipoyllysine modification.

The protein belongs to the GcvH family. As to quaternary structure, the glycine cleavage system is composed of four proteins: P, T, L and H. (R)-lipoate is required as a cofactor.

The glycine cleavage system catalyzes the degradation of glycine. The H protein shuttles the methylamine group of glycine from the P protein to the T protein. In Opitutus terrae (strain DSM 11246 / JCM 15787 / PB90-1), this protein is Glycine cleavage system H protein.